The sequence spans 198 residues: Holliday junction branch migration complex subunit RuvA (198 aa).

The interval 1–64 (MYEYIKGEYM…EDFIGLYGFE (64 aa)) is domain I. Residues 65-143 (SLEELEMFKM…TDELLNCIDE (79 aa)) are domain II. Residues 144-154 (FDDVTQDNSLA) form a flexible linker region. Positions 154 to 198 (AVSEALSALISLGYTEKEAEKVLRDVDKSESVENIIKSALVKLMG) are domain III.

This sequence belongs to the RuvA family. In terms of assembly, homotetramer. Forms an RuvA(8)-RuvB(12)-Holliday junction (HJ) complex. HJ DNA is sandwiched between 2 RuvA tetramers; dsDNA enters through RuvA and exits via RuvB. An RuvB hexamer assembles on each DNA strand where it exits the tetramer. Each RuvB hexamer is contacted by two RuvA subunits (via domain III) on 2 adjacent RuvB subunits; this complex drives branch migration. In the full resolvosome a probable DNA-RuvA(4)-RuvB(12)-RuvC(2) complex forms which resolves the HJ.

It localises to the cytoplasm. Functionally, the RuvA-RuvB-RuvC complex processes Holliday junction (HJ) DNA during genetic recombination and DNA repair, while the RuvA-RuvB complex plays an important role in the rescue of blocked DNA replication forks via replication fork reversal (RFR). RuvA specifically binds to HJ cruciform DNA, conferring on it an open structure. The RuvB hexamer acts as an ATP-dependent pump, pulling dsDNA into and through the RuvAB complex. HJ branch migration allows RuvC to scan DNA until it finds its consensus sequence, where it cleaves and resolves the cruciform DNA. The chain is Holliday junction branch migration complex subunit RuvA from Clostridium botulinum (strain Eklund 17B / Type B).